The primary structure comprises 663 residues: Nucleolar complex-associated protein 3 (663 aa).

A disordered region spans residues 1–132 (MAKRNRSQFR…AKEDEPDTEE (132 aa)). Basic and acidic residues predominate over residues 82 to 97 (GKVERKLHKAQEKPKD). The span at 98 to 130 (DDEEDEDSNDSSEDDEGPNEEQEAEAKEDEPDT) shows a compositional bias: acidic residues. Residues 363–408 (KKDRVHLSKKQRKARKEMQQIEEEMRNAEQAVSAEERERNQSEILK) are a coiled coil. The residue at position 395 (Ser395) is a Phosphoserine.

The protein belongs to the CBF/MAK21 family. In terms of assembly, forms a heterodimer with NOC2. This complex may be associated with pre-ribosomal particles. Also interacts with MCM2, MCM5 and ORC1.

The protein resides in the nucleus. It localises to the nucleolus. In terms of biological role, required for synthesis of 60S ribosomal subunits and the transport of pre-ribosomes from the nucleoplasm to the cytoplasm. Also required for initiation of DNA replication. May function downstream of the origin recognition complex (ORC complex) in the loading of CDC6 and the minichromosome maintenance complex (MCM complex) onto chromatin during the G1 phase of the cell cycle. Essential for growth. This chain is Nucleolar complex-associated protein 3 (NOC3), found in Saccharomyces cerevisiae (strain ATCC 204508 / S288c) (Baker's yeast).